Reading from the N-terminus, the 175-residue chain is Ferritin light chain (175 aa).

Position 2 is an N-acetylserine (serine 2). One can recognise a Ferritin-like diiron domain in the interval 7–156; sequence QNYSTEVEAA…DHLTNLRRLA (150 aa). Residues glutamate 54, glutamate 57, glutamate 58, glutamate 61, and glutamate 64 each coordinate Fe cation.

The protein belongs to the ferritin family. As to quaternary structure, oligomer of 24 subunits. There are two types of subunits: L (light) chain and H (heavy) chain. The major chain can be light or heavy, depending on the species and tissue type. The functional molecule forms a roughly spherical shell with a diameter of 12 nm and contains a central cavity into which the insoluble mineral iron core is deposited. Interacts with NCOA4.

It localises to the cytoplasmic vesicle. The protein localises to the autophagosome. The protein resides in the cytoplasm. Its subcellular location is the autolysosome. Stores iron in a soluble, non-toxic, readily available form. Important for iron homeostasis. Iron is taken up in the ferrous form and deposited as ferric hydroxides after oxidation. Also plays a role in delivery of iron to cells. Mediates iron uptake in capsule cells of the developing kidney. Delivery to lysosomes by the cargo receptor NCOA4 for autophagic degradation and release or iron. This chain is Ferritin light chain (FTL), found in Canis lupus familiaris (Dog).